We begin with the raw amino-acid sequence, 84 residues long: MKVSVLITLAVLGVMFLLTSAEERGSDQMDSPAWLKSMEIIFQSEERECRWMFGGCTTDSDCCEHLGCRWEKPSWCAWDGTFRK.

The first 21 residues, 1–21 (MKVSVLITLAVLGVMFLLTSA), serve as a signal peptide directing secretion. Positions 22–48 (EERGSDQMDSPAWLKSMEIIFQSEERE) are excised as a propeptide. Cystine bridges form between Cys-49–Cys-63, Cys-56–Cys-68, and Cys-62–Cys-76.

This sequence belongs to the neurotoxin 10 (Hwtx-1) family. 06 (F4b) subfamily. As to expression, expressed by the venom gland.

Its subcellular location is the secreted. Functionally, probable ion channel inhibitor. The chain is U2-theraphotoxin-Cg1b 2 from Chilobrachys guangxiensis (Chinese earth tiger tarantula).